Consider the following 295-residue polypeptide: Bifunctional protein FolD (295 aa).

NADP(+) is bound by residues 165–167, S190, and I231; that span reads GRS.

Belongs to the tetrahydrofolate dehydrogenase/cyclohydrolase family. As to quaternary structure, homodimer.

It catalyses the reaction (6R)-5,10-methylene-5,6,7,8-tetrahydrofolate + NADP(+) = (6R)-5,10-methenyltetrahydrofolate + NADPH. It carries out the reaction (6R)-5,10-methenyltetrahydrofolate + H2O = (6R)-10-formyltetrahydrofolate + H(+). The protein operates within one-carbon metabolism; tetrahydrofolate interconversion. In terms of biological role, catalyzes the oxidation of 5,10-methylenetetrahydrofolate to 5,10-methenyltetrahydrofolate and then the hydrolysis of 5,10-methenyltetrahydrofolate to 10-formyltetrahydrofolate. The chain is Bifunctional protein FolD from Nitrosomonas eutropha (strain DSM 101675 / C91 / Nm57).